The primary structure comprises 268 residues: Glucosamine-6-phosphate deaminase (268 aa).

D72 acts as the Proton acceptor; for enolization step in catalysis. D141 (for ring-opening step) is an active-site residue. Residue H143 is the Proton acceptor; for ring-opening step of the active site. E148 acts as the For ring-opening step in catalysis.

The protein belongs to the glucosamine/galactosamine-6-phosphate isomerase family. NagB subfamily. Homohexamer.

It carries out the reaction alpha-D-glucosamine 6-phosphate + H2O = beta-D-fructose 6-phosphate + NH4(+). The protein operates within amino-sugar metabolism; N-acetylneuraminate degradation; D-fructose 6-phosphate from N-acetylneuraminate: step 5/5. Its activity is regulated as follows. Allosterically activated by N-acetylglucosamine 6-phosphate (GlcNAc6P). Catalyzes the reversible isomerization-deamination of glucosamine 6-phosphate (GlcN6P) to form fructose 6-phosphate (Fru6P) and ammonium ion. The sequence is that of Glucosamine-6-phosphate deaminase from Proteus mirabilis (strain HI4320).